Here is a 310-residue protein sequence, read N- to C-terminus: uncharacterized protein (310 aa).

Residues 269-307 (DLAELERKKSLAEIHKKAAMAKKREEKKKIKQELKKSAK) are a coiled coil. The segment covering 290-304 (KKREEKKKIKQELKK) has biased composition (basic and acidic residues). The tract at residues 290 to 310 (KKREEKKKIKQELKKSAKGKK) is disordered.

This is an uncharacterized protein from Magallana gigas (Pacific oyster).